Here is an 82-residue protein sequence, read N- to C-terminus: Acyl carrier protein (82 aa).

One can recognise a Carrier domain in the interval 3–78 (QEIFERVKKV…KAVEHISEKV (76 aa)). An O-(pantetheine 4'-phosphoryl)serine modification is found at S38.

Belongs to the acyl carrier protein (ACP) family. In terms of processing, 4'-phosphopantetheine is transferred from CoA to a specific serine of apo-ACP by AcpS. This modification is essential for activity because fatty acids are bound in thioester linkage to the sulfhydryl of the prosthetic group.

The protein resides in the cytoplasm. The protein operates within lipid metabolism; fatty acid biosynthesis. Functionally, carrier of the growing fatty acid chain in fatty acid biosynthesis. This is Acyl carrier protein from Gloeothece citriformis (strain PCC 7424) (Cyanothece sp. (strain PCC 7424)).